The sequence spans 236 residues: MRFAVVTFPGSNGDHDALMAIRLGLGHAAELVWYTETDLSRFDCIIIPGGFSYGDYLRAGALARFAPVMSAVAREAEAGKPILGICNGFQILTEARLLPGALLRNASLEFVCDWVWVRVEQTRTPWTSQLAPGTLLRLPIAHGEGRYYVEAEELVALETNGQVVFRYVDADGLPTADANPNGSVANIAGVCNERGNVVGLMPHPERAYDRFVGGDDGLRILASVLSVGLEVAHSPR.

The Glutamine amidotransferase type-1 domain occupies 2–234 (RFAVVTFPGS…LSVGLEVAHS (233 aa)). The active-site Nucleophile is C86. Active-site residues include H203 and E205.

Part of the FGAM synthase complex composed of 1 PurL, 1 PurQ and 2 PurS subunits.

Its subcellular location is the cytoplasm. It catalyses the reaction N(2)-formyl-N(1)-(5-phospho-beta-D-ribosyl)glycinamide + L-glutamine + ATP + H2O = 2-formamido-N(1)-(5-O-phospho-beta-D-ribosyl)acetamidine + L-glutamate + ADP + phosphate + H(+). It carries out the reaction L-glutamine + H2O = L-glutamate + NH4(+). It functions in the pathway purine metabolism; IMP biosynthesis via de novo pathway; 5-amino-1-(5-phospho-D-ribosyl)imidazole from N(2)-formyl-N(1)-(5-phospho-D-ribosyl)glycinamide: step 1/2. Functionally, part of the phosphoribosylformylglycinamidine synthase complex involved in the purines biosynthetic pathway. Catalyzes the ATP-dependent conversion of formylglycinamide ribonucleotide (FGAR) and glutamine to yield formylglycinamidine ribonucleotide (FGAM) and glutamate. The FGAM synthase complex is composed of three subunits. PurQ produces an ammonia molecule by converting glutamine to glutamate. PurL transfers the ammonia molecule to FGAR to form FGAM in an ATP-dependent manner. PurS interacts with PurQ and PurL and is thought to assist in the transfer of the ammonia molecule from PurQ to PurL. This chain is Phosphoribosylformylglycinamidine synthase subunit PurQ, found in Thermomicrobium roseum (strain ATCC 27502 / DSM 5159 / P-2).